Consider the following 191-residue polypeptide: NAD(P)H-dependent FMN reductase LOT6 (191 aa).

FMN contacts are provided by residues Arg-11, 94 to 97 (QYNW), and Tyr-124.

Homodimer.

It localises to the cytoplasm. The protein localises to the nucleus. The catalysed reaction is FMNH2 + NADP(+) = FMN + NADPH + 2 H(+). It carries out the reaction FMNH2 + NAD(+) = FMN + NADH + 2 H(+). Its function is as follows. Has several reductase activities that are NAD(P)H-dependent and involve FMN as a cofactor, ferricyanide being the best substrate for reduction. May be involved in ferric iron assimilation. This chain is NAD(P)H-dependent FMN reductase LOT6 (LOT6), found in Saccharomyces cerevisiae (strain ATCC 204508 / S288c) (Baker's yeast).